We begin with the raw amino-acid sequence, 462 residues long: tRNA modification GTPase MnmE (462 aa).

Arg-27, Glu-89, and Arg-128 together coordinate (6S)-5-formyl-5,6,7,8-tetrahydrofolate. Residues 224 to 383 (GLATAIVGRP…LEAQIAKLFF (160 aa)) enclose the TrmE-type G domain. K(+) is bound at residue Asn-234. Residues 234–239 (NVGKSS), 253–259 (TDVAGTT), and 278–281 (DTAG) contribute to the GTP site. Residue Ser-238 coordinates Mg(2+). Thr-253, Val-255, and Thr-258 together coordinate K(+). Residue Thr-259 coordinates Mg(2+). (6S)-5-formyl-5,6,7,8-tetrahydrofolate is bound at residue Lys-462.

The protein belongs to the TRAFAC class TrmE-Era-EngA-EngB-Septin-like GTPase superfamily. TrmE GTPase family. As to quaternary structure, homodimer. Heterotetramer of two MnmE and two MnmG subunits. The cofactor is K(+).

The protein localises to the cytoplasm. Functionally, exhibits a very high intrinsic GTPase hydrolysis rate. Involved in the addition of a carboxymethylaminomethyl (cmnm) group at the wobble position (U34) of certain tRNAs, forming tRNA-cmnm(5)s(2)U34. The sequence is that of tRNA modification GTPase MnmE from Latilactobacillus sakei subsp. sakei (strain 23K) (Lactobacillus sakei subsp. sakei).